A 391-amino-acid chain; its full sequence is Probable dual-specificity RNA methyltransferase RlmN (391 aa).

The tract at residues 1–33 is disordered; it reads MTTPLDTPTREPLPLAPAGPGKLVMSAPRRGKP. Residues 12–21 show a composition bias toward low complexity; the sequence is PLPLAPAGPG. Glu124 acts as the Proton acceptor in catalysis. The 244-residue stretch at 130–373 folds into the Radical SAM core domain; that stretch reads YKNRDTICIS…TTVRDTRGSD (244 aa). A disulfide bond links Cys137 and Cys378. The [4Fe-4S] cluster site is built by Cys144, Cys148, and Cys151. S-adenosyl-L-methionine is bound by residues 199 to 200, Ser233, 256 to 258, and Asn335; these read GE and SLH. Cys378 serves as the catalytic S-methylcysteine intermediate.

The protein belongs to the radical SAM superfamily. RlmN family. It depends on [4Fe-4S] cluster as a cofactor.

It is found in the cytoplasm. It catalyses the reaction adenosine(2503) in 23S rRNA + 2 reduced [2Fe-2S]-[ferredoxin] + 2 S-adenosyl-L-methionine = 2-methyladenosine(2503) in 23S rRNA + 5'-deoxyadenosine + L-methionine + 2 oxidized [2Fe-2S]-[ferredoxin] + S-adenosyl-L-homocysteine. It carries out the reaction adenosine(37) in tRNA + 2 reduced [2Fe-2S]-[ferredoxin] + 2 S-adenosyl-L-methionine = 2-methyladenosine(37) in tRNA + 5'-deoxyadenosine + L-methionine + 2 oxidized [2Fe-2S]-[ferredoxin] + S-adenosyl-L-homocysteine. Functionally, specifically methylates position 2 of adenine 2503 in 23S rRNA and position 2 of adenine 37 in tRNAs. The protein is Probable dual-specificity RNA methyltransferase RlmN of Kineococcus radiotolerans (strain ATCC BAA-149 / DSM 14245 / SRS30216).